Consider the following 116-residue polypeptide: Appetite-regulating hormone (116 aa).

A signal peptide spans 1 to 23 (MPAPRTICSLLLLSMLWMDLAMA). Ser-26 carries the O-decanoyl serine; alternate lipid modification. Ser-26 carries the O-hexanoyl serine; alternate lipid modification. Residue Ser-26 is the site of O-octanoyl serine; alternate attachment. The tract at residues 29–67 (SPEHQKLQRKEPKKPSGRLKPRALEGQFDPDVGSQEEGA) is disordered. A compositionally biased stretch (basic and acidic residues) spans 31–42 (EHQKLQRKEPKK). The propeptide at 51–74 (ALEGQFDPDVGSQEEGAEDELEIR) is removed in mature form. Residue Leu-97 is modified to Leucine amide. Positions 98–116 (GKFLQDILWEEAEETLADE) are cleaved as a propeptide — removed in mature form.

The protein belongs to the motilin family. In terms of processing, O-octanoylated by GOAT/MBOAT4. O-octanoylation is essential for ghrelin activity. Post-translationally, amidation of Leu-97 is essential for obestatin activity.

It is found in the secreted. In terms of biological role, ghrelin is the ligand for growth hormone secretagogue receptor type 1 (GHSR). Induces the release of growth hormone from the pituitary. Has an appetite-stimulating effect, induces adiposity and stimulates gastric acid secretion. Involved in growth regulation. Obestatin may be the ligand for GPR39. May have an appetite-reducing effect resulting in decreased food intake. May reduce gastric emptying activity and jejunal motility. This chain is Appetite-regulating hormone (GHRL), found in Capra hircus (Goat).